Consider the following 307-residue polypeptide: Putative gluconeogenesis factor (307 aa).

This sequence belongs to the gluconeogenesis factor family.

It is found in the cytoplasm. Its function is as follows. Required for morphogenesis under gluconeogenic growth conditions. In Yersinia pestis, this protein is Putative gluconeogenesis factor.